Reading from the N-terminus, the 465-residue chain is RuvB-like helicase 2 (465 aa).

An ATP-binding site is contributed by 73–80; that stretch reads GEPSTGKT.

The protein belongs to the RuvB family. Forms homohexameric rings. May form a dodecamer with pont made of two stacked hexameric rings. Component of the chromatin remodeling Ino80 complex.

The protein resides in the nucleus. The catalysed reaction is ATP + H2O = ADP + phosphate + H(+). Acts as a transcriptional coactivator in Wg signaling. Functionally, proposed core component of the chromatin remodeling Ino80 complex which is involved in transcriptional regulation, DNA replication and probably DNA repair. In Aedes aegypti (Yellowfever mosquito), this protein is RuvB-like helicase 2.